The primary structure comprises 861 residues: Probable beta-glucosidase A (861 aa).

Positions 1 to 19 (MKLSILEAAALTAASVASA) are cleaved as a signal peptide. N-linked (GlcNAc...) asparagine glycosylation is found at Asn-62, Asn-212, and Asn-253. Asp-281 is an active-site residue. N-linked (GlcNAc...) asparagine glycans are attached at residues Asn-316, Asn-323, Asn-355, Asn-524, Asn-543, Asn-565, Asn-669, and Asn-713. Residues 735–754 (PEGATDGSPQPRLPASGGPG) form a disordered region.

This sequence belongs to the glycosyl hydrolase 3 family.

It localises to the secreted. It catalyses the reaction Hydrolysis of terminal, non-reducing beta-D-glucosyl residues with release of beta-D-glucose.. Its pathway is glycan metabolism; cellulose degradation. Beta-glucosidases are one of a number of cellulolytic enzymes involved in the degradation of cellulosic biomass. Catalyzes the last step releasing glucose from the inhibitory cellobiose. This is Probable beta-glucosidase A (bglA) from Aspergillus terreus.